We begin with the raw amino-acid sequence, 673 residues long: Pesticin receptor (673 aa).

The N-terminal stretch at 1 to 22 (MKMTRLYPLALGGLLLPAIANA) is a signal peptide. The TonB box signature appears at 30-37 (STLVVTAS). A TBDR plug domain is found at 41–155 (SRSASANNVS…QGGIINIVTQ (115 aa)). One can recognise a TBDR beta-barrel domain in the interval 160 to 672 (TPRGYIEGGV…TVGINTRIDF (513 aa)). The TonB C-terminal box motif lies at 657–673 (QVNMGRTVGINTRIDFF).

The protein belongs to the TonB-dependent receptor family.

Its subcellular location is the cell outer membrane. In terms of biological role, receptor for the bacteriocin pesticin and for the siderophore yersiniabactin. This is Pesticin receptor (fyuA) from Yersinia pestis.